Consider the following 292-residue polypeptide: Elongation factor Ts (292 aa).

The involved in Mg(2+) ion dislocation from EF-Tu stretch occupies residues Thr-79–Val-82.

This sequence belongs to the EF-Ts family.

It is found in the cytoplasm. In terms of biological role, associates with the EF-Tu.GDP complex and induces the exchange of GDP to GTP. It remains bound to the aminoacyl-tRNA.EF-Tu.GTP complex up to the GTP hydrolysis stage on the ribosome. The protein is Elongation factor Ts of Metamycoplasma arthritidis (strain 158L3-1) (Mycoplasma arthritidis).